A 166-amino-acid polypeptide reads, in one-letter code: Protein FAM89A (166 aa).

The protein belongs to the FAM89 family.

The protein is Protein FAM89A (fam89a) of Xenopus laevis (African clawed frog).